Consider the following 2429-residue polypeptide: MKVDERVAIIGTGCRFPGGSNSPHELWELLVNPRDVARKVPPDRFNIAAFHHPQMGHHGTTAAWESYFLDENIQRFDASFFNISPTEAAAMDPQQRLLLETVYESLDRAGLRLEELQGTQTGVFCGLMRHDYHRLLTADMETNPPYALAGTAGSVLANRVSYFFDWHGPSITIDTACSSSLVAVHLACESLRKGECSLAIVGGSNLLLSPDPYIWESKMQLLSPTNRCHMWDASADGFACGEGVASVVLKRLTDALADGDHIECVIRATGVNSDGRSPGLTMPNSNAQSALIMDTYARAGLHPKQNPHDRCQFFEAHGTGTKAGDPQEAAAIQDALFGCNMEENQPNNETVYVGSIKTIIGHTAGAAGLAGVIRASLALQNGVVPPNLHFNRVSDTVAPHTTHLEVPTRAVRWPELPSGVPRRVSVNSFGFGGTNAHAILESFDQASRHPSTQVERVHQSQQALLPIVFSAASQSSLADLLEGYVQWLFDNPNVDLLGLASSLLLRRSTLRYRKAFIAASPDELRIKIQHELKRNTTDAQWAIMSPPKREGGNCILGVFTGQGAQWPQMGLELIQNCPQARMRLRELQQSLDDLPIEYRPGFTLLDELSAPESQSRLGETALSLPLRTALQIIQIDLLRALGITFNAVVGHSSGEIAAVYAAGILNATDAIRVAYLRGFAVKHAASRGKMIAVNLTEHQANAICSQPMWKGQVAVAAYNSPSNVTLSGDPETMDELVWLLRSLERHTHPLNTDAAYHSHHMQPCAGPYLQALKSCNVGVSSPSSVQMFSSVYKGLVVNSTDCALDSTYWCDNMLRPVLFSQAISTCLDQIPDINLIIEVGPHTALQGSIKHILHDTLSEGSVVPYIGLAHRGEDSIQSMAAAIGRLWAYLGMRDLKLQQYIQLFGPFRESCCVQSLPTYPFDHRTSYWAEPRLSQARLHCPIPPHPLLGVLSSECGRDEWRWRNYLHLEEIPWLTGHRILSDISYPPMGYIAMAVEAAQAASRSKPLQLVEIHSLIIERTISIPVEGPGIETLFKMDIESADNDTMTGTFQCQISCGNEFQKCASGRVILALGEANPTVLPSKSKGMSISYPMNVDKFYNQLQIVGGNVSDIFRGITELTRQEGGMQGVANVPSHDQPTFHPVVMTTALQVLWGAMMSDEGRLSALPLPVRIDSVTINPSCSHSGHVCLEASITRTGSGRNGCGDVLVFNGQGDGIAQLEGIHLTLSKPKNSSDDQALAFGTTVWGPLNPDPSIGYPKNLPYNLSIQNLQARLAVLYLRDAQAGLTAQDRERLVSHRRHYVAWMDSTLSKIRDGVHPHYPRDWLLGTIGELDSQTTSHETLIHVTHIVGQNLLQFLSGGEETILLKLRDNNIDLLTRYYQDDEAMRIMSDSLGKVVSQIVFRNPQLHVLEVGAGTGSATRAILSSIGRNYHSYTYTDISPAFFEGASAAFHTHEDRFIYKVLDVECDVTDQGFSMHSYDVVIASNVLHATRSLRRTLMNIRKLIKPSGYLVLLEGTDPDRVPTPFIFGAFEGWWLGEDDGRSGGPLIRREEWDVLLQCTGFGRCTSYTPTNQANLYGMSVIVSQPTDMPAIPVIEMDLLLVGGSTETTRQIILDLKTILRDSFVQISSCLSVDDFTPGPGISQLAILCLAELDHHSEETRWQWQDMRLMMTAASCLLWVSPADDPHSGVSKGLLRSLALDSSSGLLQHLTVIDSTPIGAEMLATTLMNLVRTKQEGMGRPEIELGWGEGILNIPRIVRDPTITQRLLASRSPCVFNLVDVREQAVCRLVSTEGSQKEKVDVYLTDPKNATTSAAKLFSNESIVQYQVHYCTQAALTITEKCSLFLIVGQNVFNGARQLALSISHGSIISTPLSWAWDVPASVSTDNEPKLLAAVAATILAFAIADLAGPSSTLWVHEAQAMGPTFMDALVSAVSDRQDIKNLTLTTSQCGLSDTRVHFVHPHSSTKTLSSVLPRNVSSAVLFDDGRLSRRSRLVLPRCANFRSFSDFFRPSSIIEEIDIQSVATILNSACAFVTRKGYEKGSSPRIISPREQSSVDSLEVVNWRQPTWIEAQILPASSLVSLSPTMAYVVVNMNHKLRRLVLDFLVRQGARHIVWVGEWSDEDFAWIAQLSRDEVHVAVVQMWAFLSSISDLYDQLTSTRKAEIPISSLQTYMPIGGIIYDGLKDSPQQAAENTLLLDELCGNDATFFILVGSLLGHIGFTDSNSFIGSTTGVLSGVISRRRQRGYVGSVLYLGEQNAVEDITLSAGDIREAFSEAILLGPPESTSNGEILAGLRNSEKWELVPKLSAWNESKTLLESDDKSQSAGQGQAHDTDAVTQLKLATSVAEAREIILQLFKEKLRRKLGLSSDVPLRRETLLHELGIDSLVAVDIHIWFARELGAKIPVVQIMGAGSIGSMVDEVVKRRNGFT.

The Ketosynthase family 3 (KS3) domain maps to 4-442 (DERVAIIGTG…GTNAHAILES (439 aa)). Active-site for beta-ketoacyl synthase activity residues include cysteine 177, histidine 317, and histidine 362. The segment at 558 to 873 (VFTGQGAQWP…PYIGLAHRGE (316 aa)) is malonyl-CoA:ACP transacylase (MAT) domain. Serine 652 acts as the For acyl/malonyl transferase activity in catalysis. Residues 945-1075 (HPLLGVLSSE…GRVILALGEA (131 aa)) are N-terminal hotdog fold. Residues 945-1227 (HPLLGVLSSE…QLEGIHLTLS (283 aa)) are product template (PT) domain. One can recognise a PKS/mFAS DH domain in the interval 945 to 1233 (HPLLGVLSSE…LTLSKPKNSS (289 aa)). The interval 1090–1233 (SYPMNVDKFY…LTLSKPKNSS (144 aa)) is C-terminal hotdog fold. The methyltransferase (CMeT) domain stretch occupies residues 1409-2158 (LEVGAGTGSA…ISDLYDQLTS (750 aa)). In terms of domain architecture, Carrier spans 2350–2425 (EIILQLFKEK…SMVDEVVKRR (76 aa)). Residue serine 2385 is modified to O-(pantetheine 4'-phosphoryl)serine.

The protein operates within secondary metabolite biosynthesis. Its function is as follows. Reducing polyketide synthase; part of the gene cluster that mediates the biosynthesis of 2,4'-dihydroxy-3'-methoxypropiophenone. The first step of the pathway is the conversion of acetate into acetyl-CoA by the acyl-CoA ligase ppsA. Acetyl-CoA is then used as a starter unit by the polyketide synthase ppsB and condensed with 4 malonyl-CoA unit to produce the pentaketide backbone. During polyketide extension, the polykedite chain is probably reduced and dehydrated by the KR and PT domains, respectively. O-methylation seems to be catalyzed by an unknown methyltransferase rather than by the CMeT domain of ppsB. Two hydroxylations and one further decarboxylation step catalyzed by yet unknown enzymes are then required to yield 4'-hydroxy-3'-methoxypropiophenone. PpsC functions as a carrier protein to transport 4'-hydroxy-3'-methoxypropiophenone to a specific cell compartment in which 4'-hydroxy-3'-methoxypropiophenone is hydroxylated to 2,4'-dihydroxy-3'-methoxypropiophenone by a still to be identified enzyme. The polypeptide is Reducing polyketide synthase ppsB (Aspergillus oryzae (strain ATCC 42149 / RIB 40) (Yellow koji mold)).